Here is a 638-residue protein sequence, read N- to C-terminus: 1-deoxy-D-xylulose-5-phosphate synthase (638 aa).

Residues His79 and 120–122 (GHS) contribute to the thiamine diphosphate site. Mg(2+) is bound at residue Asp151. Residues 152–153 (GA), Asn182, Tyr291, and Glu373 each bind thiamine diphosphate. Asn182 is a Mg(2+) binding site.

It belongs to the transketolase family. DXPS subfamily. In terms of assembly, homodimer. Mg(2+) is required as a cofactor. Requires thiamine diphosphate as cofactor.

The catalysed reaction is D-glyceraldehyde 3-phosphate + pyruvate + H(+) = 1-deoxy-D-xylulose 5-phosphate + CO2. Its pathway is metabolic intermediate biosynthesis; 1-deoxy-D-xylulose 5-phosphate biosynthesis; 1-deoxy-D-xylulose 5-phosphate from D-glyceraldehyde 3-phosphate and pyruvate: step 1/1. Its function is as follows. Catalyzes the acyloin condensation reaction between C atoms 2 and 3 of pyruvate and glyceraldehyde 3-phosphate to yield 1-deoxy-D-xylulose-5-phosphate (DXP). This chain is 1-deoxy-D-xylulose-5-phosphate synthase, found in Xanthomonas campestris pv. campestris (strain 8004).